The chain runs to 92 residues: Small ribosomal subunit protein uS19 (92 aa).

Belongs to the universal ribosomal protein uS19 family.

Protein S19 forms a complex with S13 that binds strongly to the 16S ribosomal RNA. This Streptococcus agalactiae serotype Ia (strain ATCC 27591 / A909 / CDC SS700) protein is Small ribosomal subunit protein uS19.